The primary structure comprises 170 residues: CDP-archaeol synthase (170 aa).

Transmembrane regions (helical) follow at residues 9–29 (AFWYILPAYFANSSPVVLGGG), 53–73 (GFFGGLIVGTIIGIVQYFLLP), 79–99 (LGIAIELAFLLSLGTLVGDLI), 114–134 (PAVGLDQWGFLIAALCFAYPV), and 140–160 (GEVLFLLVITPLIHWGANIFA).

This sequence belongs to the CDP-archaeol synthase family. Mg(2+) serves as cofactor.

Its subcellular location is the cell membrane. The enzyme catalyses 2,3-bis-O-(geranylgeranyl)-sn-glycerol 1-phosphate + CTP + H(+) = CDP-2,3-bis-O-(geranylgeranyl)-sn-glycerol + diphosphate. It participates in membrane lipid metabolism; glycerophospholipid metabolism. In terms of biological role, catalyzes the formation of CDP-2,3-bis-(O-geranylgeranyl)-sn-glycerol (CDP-archaeol) from 2,3-bis-(O-geranylgeranyl)-sn-glycerol 1-phosphate (DGGGP) and CTP. This reaction is the third ether-bond-formation step in the biosynthesis of archaeal membrane lipids. The polypeptide is CDP-archaeol synthase (Pyrococcus horikoshii (strain ATCC 700860 / DSM 12428 / JCM 9974 / NBRC 100139 / OT-3)).